The chain runs to 492 residues: Lysine--tRNA ligase (492 aa).

Mg(2+) is bound by residues E403 and E410.

This sequence belongs to the class-II aminoacyl-tRNA synthetase family. Homodimer. It depends on Mg(2+) as a cofactor.

The protein localises to the cytoplasm. It catalyses the reaction tRNA(Lys) + L-lysine + ATP = L-lysyl-tRNA(Lys) + AMP + diphosphate. The chain is Lysine--tRNA ligase from Mycoplasmoides gallisepticum (strain R(low / passage 15 / clone 2)) (Mycoplasma gallisepticum).